Here is a 283-residue protein sequence, read N- to C-terminus: Elongation factor Ts (283 aa).

An involved in Mg(2+) ion dislocation from EF-Tu region spans residues 80 to 83 (TDFV).

It belongs to the EF-Ts family.

It localises to the cytoplasm. Its function is as follows. Associates with the EF-Tu.GDP complex and induces the exchange of GDP to GTP. It remains bound to the aminoacyl-tRNA.EF-Tu.GTP complex up to the GTP hydrolysis stage on the ribosome. This chain is Elongation factor Ts, found in Cronobacter sakazakii (strain ATCC BAA-894) (Enterobacter sakazakii).